The following is a 384-amino-acid chain: S-adenosylmethionine synthase (384 aa).

His15 contributes to the ATP binding site. Residue Asp17 coordinates Mg(2+). A K(+)-binding site is contributed by Glu43. L-methionine contacts are provided by Glu56 and Gln99. The flexible loop stretch occupies residues 99 to 109; it reads QSPDINQGVDR. ATP is bound by residues 164–166, 230–231, Asp239, 245–246, Ala262, and Lys266; these read DAK, RF, and RK. An L-methionine-binding site is contributed by Asp239. Residue Lys270 participates in L-methionine binding.

This sequence belongs to the AdoMet synthase family. In terms of assembly, homotetramer; dimer of dimers. Mg(2+) serves as cofactor. It depends on K(+) as a cofactor.

The protein resides in the cytoplasm. The enzyme catalyses L-methionine + ATP + H2O = S-adenosyl-L-methionine + phosphate + diphosphate. It participates in amino-acid biosynthesis; S-adenosyl-L-methionine biosynthesis; S-adenosyl-L-methionine from L-methionine: step 1/1. Functionally, catalyzes the formation of S-adenosylmethionine (AdoMet) from methionine and ATP. The overall synthetic reaction is composed of two sequential steps, AdoMet formation and the subsequent tripolyphosphate hydrolysis which occurs prior to release of AdoMet from the enzyme. This Salmonella arizonae (strain ATCC BAA-731 / CDC346-86 / RSK2980) protein is S-adenosylmethionine synthase.